Reading from the N-terminus, the 127-residue chain is Protein ApaG (127 aa).

The ApaG domain occupies 3-127 (DQPPTEIQIS…FRLAAATVFH (125 aa)).

The polypeptide is Protein ApaG (Acidithiobacillus ferrooxidans (strain ATCC 23270 / DSM 14882 / CIP 104768 / NCIMB 8455) (Ferrobacillus ferrooxidans (strain ATCC 23270))).